Here is a 627-residue protein sequence, read N- to C-terminus: Protein zyg-11 homolog A (627 aa).

LRR repeat units lie at residues 123 to 146 (LPNL…LSCK), 203 to 227 (LPNL…SFLQ), and 409 to 432 (ITSI…LIMA).

Belongs to the zyg-11 family.

Its function is as follows. Probably acts as a target recruitment subunit in an E3 ubiquitin ligase complex ZYGA-CUL2-elongin BC. This Mus musculus (Mouse) protein is Protein zyg-11 homolog A (Zyg11a).